A 226-amino-acid polypeptide reads, in one-letter code: 3-dehydroquinate dehydratase (226 aa).

3-dehydroquinate is bound by residues 33 to 35 and Arg-65; that span reads ELR. Residue His-120 is the Proton donor/acceptor of the active site. Residue Lys-147 is the Schiff-base intermediate with substrate of the active site. Positions 186, 205, and 209 each coordinate 3-dehydroquinate.

It belongs to the type-I 3-dehydroquinase family. As to quaternary structure, homodimer.

The enzyme catalyses 3-dehydroquinate = 3-dehydroshikimate + H2O. The protein operates within metabolic intermediate biosynthesis; chorismate biosynthesis; chorismate from D-erythrose 4-phosphate and phosphoenolpyruvate: step 3/7. Its function is as follows. Involved in the third step of the chorismate pathway, which leads to the biosynthesis of aromatic amino acids. Catalyzes the cis-dehydration of 3-dehydroquinate (DHQ) and introduces the first double bond of the aromatic ring to yield 3-dehydroshikimate. This Thermodesulfovibrio yellowstonii (strain ATCC 51303 / DSM 11347 / YP87) protein is 3-dehydroquinate dehydratase.